The sequence spans 241 residues: tRNA (guanine-N(7)-)-methyltransferase (241 aa).

The tract at residues 1-20 (MTESNDTPIQPEAGDERQHR) is disordered. Positions 71, 96, 123, and 146 each coordinate S-adenosyl-L-methionine. Aspartate 146 is an active-site residue. Residues lysine 150, aspartate 182, and 219–222 (TKFE) each bind substrate.

It belongs to the class I-like SAM-binding methyltransferase superfamily. TrmB family.

It catalyses the reaction guanosine(46) in tRNA + S-adenosyl-L-methionine = N(7)-methylguanosine(46) in tRNA + S-adenosyl-L-homocysteine. It participates in tRNA modification; N(7)-methylguanine-tRNA biosynthesis. In terms of biological role, catalyzes the formation of N(7)-methylguanine at position 46 (m7G46) in tRNA. This is tRNA (guanine-N(7)-)-methyltransferase from Pseudomonas fluorescens (strain ATCC BAA-477 / NRRL B-23932 / Pf-5).